Reading from the N-terminus, the 177-residue chain is Large ribosomal subunit protein uL6 (177 aa).

It belongs to the universal ribosomal protein uL6 family. In terms of assembly, part of the 50S ribosomal subunit.

Its function is as follows. This protein binds to the 23S rRNA, and is important in its secondary structure. It is located near the subunit interface in the base of the L7/L12 stalk, and near the tRNA binding site of the peptidyltransferase center. The protein is Large ribosomal subunit protein uL6 of Halorhodospira halophila (strain DSM 244 / SL1) (Ectothiorhodospira halophila (strain DSM 244 / SL1)).